A 161-amino-acid chain; its full sequence is Nucleotide-binding protein Tcr_1902 (161 aa).

It belongs to the YajQ family.

Nucleotide-binding protein. This chain is Nucleotide-binding protein Tcr_1902, found in Hydrogenovibrio crunogenus (strain DSM 25203 / XCL-2) (Thiomicrospira crunogena).